The primary structure comprises 453 residues: UDP-glucose 6-dehydrogenase (453 aa).

Residues 2-19 (RLCV…AACF), valine 11, threonine 121, and glutamate 158 each bind NAD(+). Substrate contacts are provided by residues 154–158 (EFLKE), lysine 210, asparagine 214, 255–259 (FIYAG), and glycine 263. Residue cysteine 266 is the Nucleophile of the active site. Residue lysine 269 coordinates NAD(+). A substrate-binding site is contributed by lysine 327. Arginine 334 provides a ligand contact to NAD(+).

This sequence belongs to the UDP-glucose/GDP-mannose dehydrogenase family.

The catalysed reaction is UDP-alpha-D-glucose + 2 NAD(+) + H2O = UDP-alpha-D-glucuronate + 2 NADH + 3 H(+). The protein operates within nucleotide-sugar biosynthesis; UDP-alpha-D-glucuronate biosynthesis; UDP-alpha-D-glucuronate from UDP-alpha-D-glucose: step 1/1. It functions in the pathway bacterial outer membrane biogenesis; lipopolysaccharide biosynthesis. This is UDP-glucose 6-dehydrogenase (udg) from Pseudomonas aeruginosa (strain ATCC 15692 / DSM 22644 / CIP 104116 / JCM 14847 / LMG 12228 / 1C / PRS 101 / PAO1).